Reading from the N-terminus, the 115-residue chain is Large ribosomal subunit protein bL19 (115 aa).

The protein belongs to the bacterial ribosomal protein bL19 family.

Functionally, this protein is located at the 30S-50S ribosomal subunit interface and may play a role in the structure and function of the aminoacyl-tRNA binding site. The protein is Large ribosomal subunit protein bL19 of Salmonella choleraesuis (strain SC-B67).